A 508-amino-acid polypeptide reads, in one-letter code: Glycerol kinase (508 aa).

An ADP-binding site is contributed by T14. The ATP site is built by T14, T15, and S16. Position 14 (T14) interacts with sn-glycerol 3-phosphate. R18 contacts ADP. Sn-glycerol 3-phosphate contacts are provided by R84, E85, and Y136. Glycerol contacts are provided by R84, E85, and Y136. At H232 the chain carries Phosphohistidine; by HPr. Position 246 (D246) interacts with sn-glycerol 3-phosphate. D246 and Q247 together coordinate glycerol. ADP contacts are provided by T268 and G311. T268, G311, Q315, and G412 together coordinate ATP. Residues G412 and N416 each coordinate ADP.

Belongs to the FGGY kinase family. Homotetramer and homodimer (in equilibrium). Post-translationally, the phosphoenolpyruvate-dependent sugar phosphotransferase system (PTS), including enzyme I, and histidine-containing protein (HPr) are required for the phosphorylation, which leads to the activation of the enzyme.

It carries out the reaction glycerol + ATP = sn-glycerol 3-phosphate + ADP + H(+). Its pathway is polyol metabolism; glycerol degradation via glycerol kinase pathway; sn-glycerol 3-phosphate from glycerol: step 1/1. Activated by phosphorylation and inhibited by fructose 1,6-bisphosphate (FBP). Key enzyme in the regulation of glycerol uptake and metabolism. Catalyzes the phosphorylation of glycerol to yield sn-glycerol 3-phosphate. This chain is Glycerol kinase, found in Streptococcus pyogenes serotype M18 (strain MGAS8232).